The chain runs to 649 residues: Threonine--tRNA ligase (649 aa).

Positions 1–61 constitute a TGS domain; it reads MIKITFPDGA…TQDGSIEIVT (61 aa). A catalytic region spans residues 242 to 540; sequence DHRKLGKELD…LIETYKGAFP (299 aa). Zn(2+) is bound by residues Cys336, His387, and His517.

This sequence belongs to the class-II aminoacyl-tRNA synthetase family. Homodimer. The cofactor is Zn(2+).

The protein resides in the cytoplasm. It carries out the reaction tRNA(Thr) + L-threonine + ATP = L-threonyl-tRNA(Thr) + AMP + diphosphate + H(+). Functionally, catalyzes the attachment of threonine to tRNA(Thr) in a two-step reaction: L-threonine is first activated by ATP to form Thr-AMP and then transferred to the acceptor end of tRNA(Thr). Also edits incorrectly charged L-seryl-tRNA(Thr). This chain is Threonine--tRNA ligase, found in Streptococcus mutans serotype c (strain ATCC 700610 / UA159).